Here is a 561-residue protein sequence, read N- to C-terminus: ATP-dependent rRNA helicase RRP3 (561 aa).

Low complexity-rich tracts occupy residues 1 to 23 (MPKA…SSNS) and 30 to 45 (ASSP…PSTS). The tract at residues 1–109 (MPKASASSAK…DEKKVATIAD (109 aa)) is disordered. The span at 100-109 (DEKKVATIAD) shows a compositional bias: basic and acidic residues. The Q motif signature appears at 114 to 142 (VEFSDLGVIPQIVEACTNMGFKHPTPIQV). The region spanning 145 to 316 (IPEALQARDV…RASLKNPVRV (172 aa)) is the Helicase ATP-binding domain. ATP is bound at residue 158–165 (AQTGSGKT). The DEAD box motif lies at 264–267 (DEAD). One can recognise a Helicase C-terminal domain in the interval 339–487 (HKDTYLVHLA…EFPGGNDKEA (149 aa)). The disordered stretch occupies residues 506–561 (LKDKGVGSAGGSGKRKRKMDGKYGDDMDRDDDQVQAGLPVSGNGRHQNQNRKKGRR).

It belongs to the DEAD box helicase family. DDX47/RRP3 subfamily. Interacts with the SSU processome.

The protein resides in the nucleus. The catalysed reaction is ATP + H2O = ADP + phosphate + H(+). ATP-dependent rRNA helicase required for pre-ribosomal RNA processing. Involved in the maturation of the 35S-pre-rRNA and to its cleavage to mature 18S rRNA. The sequence is that of ATP-dependent rRNA helicase RRP3 from Mycosarcoma maydis (Corn smut fungus).